A 315-amino-acid polypeptide reads, in one-letter code: Prephenate dehydratase (315 aa).

A Prephenate dehydratase domain is found at 7 to 190 (VVAYLGPAGT…ARTRFVAVQA (184 aa)). The 80-residue stretch at 204–283 (SVIFSLPNVP…LVFVGSWPSN (80 aa)) folds into the ACT domain.

The enzyme catalyses prephenate + H(+) = 3-phenylpyruvate + CO2 + H2O. It functions in the pathway amino-acid biosynthesis; L-phenylalanine biosynthesis; phenylpyruvate from prephenate: step 1/1. The polypeptide is Prephenate dehydratase (pheA) (Corynebacterium glutamicum (strain ATCC 13032 / DSM 20300 / JCM 1318 / BCRC 11384 / CCUG 27702 / LMG 3730 / NBRC 12168 / NCIMB 10025 / NRRL B-2784 / 534)).